Here is a 115-residue protein sequence, read N- to C-terminus: Large ribosomal subunit protein bL20c (115 aa).

The protein belongs to the bacterial ribosomal protein bL20 family.

The protein localises to the plastid. It localises to the chloroplast. Binds directly to 23S ribosomal RNA and is necessary for the in vitro assembly process of the 50S ribosomal subunit. It is not involved in the protein synthesizing functions of that subunit. This is Large ribosomal subunit protein bL20c from Angiopteris evecta (Mule's foot fern).